The following is a 1501-amino-acid chain: Opaque-specific ABC transporter CDR3 (1501 aa).

Over 1–502 (MAKTSQAEGQ…KRYWDRMRGD (502 aa)) the chain is Cytoplasmic. A disordered region spans residues 58-87 (TYTTATMHPNGINPISDKTDPTLDPESPSF). An ABC transporter 1 domain is found at 140–395 (KYARNIFNKF…FKKMGFVCQD (256 aa)). The helical transmembrane segment at 503-523 (IIVPLSTVAGNIAMALILSSV) threads the bilayer. N-linked (GlcNAc...) asparagine glycosylation occurs at Asn-530. 5 helical membrane-spanning segments follow: residues 540 to 560 (VMYY…YNMY), 589 to 609 (FPLK…MVNF), 614 to 634 (GAFF…SHLF), 653 to 673 (LLLF…YMLG), and 755 to 775 (FGVL…FVQT). Residues 776 to 1175 (NKSSISKGET…LFQQYWRTPS (400 aa)) lie on the Cytoplasmic side of the membrane. In terms of domain architecture, ABC transporter 2 spans 840-1083 (FHWRNLTYTV…LIEYFERNGA (244 aa)). 876–883 (GASGAGKT) serves as a coordination point for ATP. The next 7 helical transmembrane spans lie at 1176–1196 (YIYS…FTYY), 1212–1232 (IFSM…LFVT), 1261–1281 (IPYQ…PVGL), 1297–1317 (LMWL…QFCI), 1325–1345 (YAAN…GVIA), 1353–1375 (FWVF…SIGL), and 1451–1471 (GIFI…YWLF).

It belongs to the ABC transporter superfamily. ABCG family. PDR (TC 3.A.1.205) subfamily.

It is found in the membrane. In Candida albicans (Yeast), this protein is Opaque-specific ABC transporter CDR3 (CDR3).